The sequence spans 265 residues: Homeobox protein Nkx-6.3 (265 aa).

Residues 139–198 constitute a DNA-binding region (homeobox); the sequence is KKHTRPTFTGHQIFALEKTFEQTKYLAGPERARLAYSLGMTESQVKVWFQNRRTKWRKKS. The disordered stretch occupies residues 196–240; it reads KKSALEPSSSTPRAPGGAGAGAGGDRAPSENEDDEYNKPLDPDSD.

Its subcellular location is the nucleus. Putative transcription factor, which may be involved in patterning of central nervous system and pancreas. This Homo sapiens (Human) protein is Homeobox protein Nkx-6.3 (NKX6-3).